The sequence spans 84 residues: FCRKMTQGKCKPVNTFGHESLANVQAVCSQKKVICKNGLSNCYQSNSAIHYTDCRKTGSSNYPNCAYKTTRAEKRIIVACEGNL.

Disulfide bonds link cysteine 10–cysteine 65, cysteine 28–cysteine 80, and cysteine 35–cysteine 42. Residues 11–15 (KPVNT), lysine 36, and arginine 55 each bind substrate.

The protein belongs to the pancreatic ribonuclease family. As to quaternary structure, homodimer; disulfide-linked.

The protein localises to the secreted. It carries out the reaction an [RNA] containing cytidine + H2O = an [RNA]-3'-cytidine-3'-phosphate + a 5'-hydroxy-ribonucleotide-3'-[RNA].. The enzyme catalyses an [RNA] containing uridine + H2O = an [RNA]-3'-uridine-3'-phosphate + a 5'-hydroxy-ribonucleotide-3'-[RNA].. The polypeptide is Seminal ribonuclease (SRN) (Giraffa camelopardalis (Giraffe)).